The following is a 97-amino-acid chain: Co-chaperonin GroES (97 aa).

Belongs to the GroES chaperonin family. As to quaternary structure, heptamer of 7 subunits arranged in a ring. Interacts with the chaperonin GroEL.

It localises to the cytoplasm. Together with the chaperonin GroEL, plays an essential role in assisting protein folding. The GroEL-GroES system forms a nano-cage that allows encapsulation of the non-native substrate proteins and provides a physical environment optimized to promote and accelerate protein folding. GroES binds to the apical surface of the GroEL ring, thereby capping the opening of the GroEL channel. This chain is Co-chaperonin GroES, found in Pseudomonas aeruginosa (strain LESB58).